The following is a 379-amino-acid chain: Chaperone protein DnaJ (379 aa).

A J domain is found at 5–69; the sequence is DYYEVLGISK…NKRASYDQFG (65 aa). A CR-type zinc finger spans residues 136–218; that stretch reads GTTKEISIRK…CHGKGTENKT (83 aa). The Zn(2+) site is built by Cys149, Cys152, Cys166, Cys169, Cys192, Cys195, Cys206, and Cys209. 4 CXXCXGXG motif repeats span residues 149 to 156, 166 to 173, 192 to 199, and 206 to 213; these read CETCHGDG, CSYCNGAG, CPKCNGSG, and CPTCHGKG.

Belongs to the DnaJ family. In terms of assembly, homodimer. Requires Zn(2+) as cofactor.

The protein resides in the cytoplasm. Participates actively in the response to hyperosmotic and heat shock by preventing the aggregation of stress-denatured proteins and by disaggregating proteins, also in an autonomous, DnaK-independent fashion. Unfolded proteins bind initially to DnaJ; upon interaction with the DnaJ-bound protein, DnaK hydrolyzes its bound ATP, resulting in the formation of a stable complex. GrpE releases ADP from DnaK; ATP binding to DnaK triggers the release of the substrate protein, thus completing the reaction cycle. Several rounds of ATP-dependent interactions between DnaJ, DnaK and GrpE are required for fully efficient folding. Also involved, together with DnaK and GrpE, in the DNA replication of plasmids through activation of initiation proteins. This chain is Chaperone protein DnaJ, found in Staphylococcus aureus (strain USA300 / TCH1516).